The following is a 325-amino-acid chain: Elongation factor P--(R)-beta-lysine ligase (325 aa).

76–78 (SPE) contributes to the substrate binding site. ATP-binding positions include 100–102 (RNE) and Asn-109. Tyr-118 provides a ligand contact to substrate. Position 244 to 245 (244 to 245 (EL)) interacts with ATP. Substrate is bound at residue Glu-251. Position 300 (Gly-300) interacts with ATP.

It belongs to the class-II aminoacyl-tRNA synthetase family. EpmA subfamily. In terms of assembly, homodimer.

The catalysed reaction is D-beta-lysine + L-lysyl-[protein] + ATP = N(6)-((3R)-3,6-diaminohexanoyl)-L-lysyl-[protein] + AMP + diphosphate + H(+). With EpmB is involved in the beta-lysylation step of the post-translational modification of translation elongation factor P (EF-P). Catalyzes the ATP-dependent activation of (R)-beta-lysine produced by EpmB, forming a lysyl-adenylate, from which the beta-lysyl moiety is then transferred to the epsilon-amino group of a conserved specific lysine residue in EF-P. The protein is Elongation factor P--(R)-beta-lysine ligase of Enterobacter sp. (strain 638).